The sequence spans 872 residues: Alanine--tRNA ligase (872 aa).

Zn(2+) is bound by residues His567, His571, Cys669, and His673.

The protein belongs to the class-II aminoacyl-tRNA synthetase family. The cofactor is Zn(2+).

It is found in the cytoplasm. The enzyme catalyses tRNA(Ala) + L-alanine + ATP = L-alanyl-tRNA(Ala) + AMP + diphosphate. Catalyzes the attachment of alanine to tRNA(Ala) in a two-step reaction: alanine is first activated by ATP to form Ala-AMP and then transferred to the acceptor end of tRNA(Ala). Also edits incorrectly charged Ser-tRNA(Ala) and Gly-tRNA(Ala) via its editing domain. This is Alanine--tRNA ligase from Streptococcus pyogenes serotype M4 (strain MGAS10750).